The primary structure comprises 116 residues: MSVESFTPTALEFTPNAAHKVKTLVDEEGNDRLKLRVFVTGGGCSGFQYGFTFDEDVADDDTIVEREGVSLVVDPMSFQYLAGAEVDYQEGLEGSRFVIKNPNASTTCGCGSSFSI.

Residues Cys44, Cys108, and Cys110 each coordinate iron-sulfur cluster.

It belongs to the HesB/IscA family. In terms of assembly, homodimer. It depends on iron-sulfur cluster as a cofactor.

In terms of biological role, required for insertion of 4Fe-4S clusters for at least IspG. The sequence is that of Iron-sulfur cluster insertion protein ErpA from Pseudomonas syringae pv. syringae (strain B728a).